The chain runs to 104 residues: L-rhamnose mutarotase (104 aa).

Substrate is bound at residue Y18. The active-site Proton donor is H22. Substrate contacts are provided by residues Y41 and 76-77 (WW).

Belongs to the rhamnose mutarotase family. In terms of assembly, homodimer.

It localises to the cytoplasm. It carries out the reaction alpha-L-rhamnose = beta-L-rhamnose. The protein operates within carbohydrate metabolism; L-rhamnose metabolism. In terms of biological role, involved in the anomeric conversion of L-rhamnose. This Acidiphilium cryptum (strain JF-5) protein is L-rhamnose mutarotase.